A 477-amino-acid polypeptide reads, in one-letter code: Cytochrome c-552 (477 aa).

A signal peptide spans 1–26 (MVRISTSISYLWGMVASLFLMMPAYS). H94 lines the heme c pocket. C122, C125, and K126 together coordinate heme. Heme c contacts are provided by C160, C163, H164, C209, C212, and H213. Ca(2+)-binding residues include E215, Y216, K261, and Q263. Substrate is bound at residue Y216. H264 is a substrate binding site. Residues H275, C282, C285, H286, H301, C314, C317, H318, and H393 each coordinate heme c.

Belongs to the cytochrome c-552 family. Ca(2+) serves as cofactor. The cofactor is heme c.

It is found in the periplasm. The catalysed reaction is 6 Fe(III)-[cytochrome c] + NH4(+) + 2 H2O = 6 Fe(II)-[cytochrome c] + nitrite + 8 H(+). It participates in nitrogen metabolism; nitrate reduction (assimilation). Functionally, catalyzes the reduction of nitrite to ammonia, consuming six electrons in the process. This is Cytochrome c-552 from Pectobacterium carotovorum subsp. carotovorum (strain PC1).